A 41-amino-acid polypeptide reads, in one-letter code: Bacteriocin (41 aa).

The cysteines at positions 9 and 14 are disulfide-linked.

It localises to the secreted. Its function is as follows. Bacteriocin active against S.aureus, S.typhi, B.thuringiensis, Klebsiella sp., E.coli KL16 and E.coli Gj137. The sequence is that of Bacteriocin from Lactococcus sp.